Consider the following 170-residue polypeptide: ATP synthase subunit b (170 aa).

Residues 22-41 (VLNWAVVVFGLYKFLPGFLG) traverse the membrane as a helical segment.

It belongs to the ATPase B chain family. As to quaternary structure, F-type ATPases have 2 components, F(1) - the catalytic core - and F(0) - the membrane proton channel. F(1) has five subunits: alpha(3), beta(3), gamma(1), delta(1), epsilon(1). F(0) has four main subunits: a(1), b(1), b'(1) and c(10-14). The alpha and beta chains form an alternating ring which encloses part of the gamma chain. F(1) is attached to F(0) by a central stalk formed by the gamma and epsilon chains, while a peripheral stalk is formed by the delta, b and b' chains.

The protein resides in the cellular thylakoid membrane. In terms of biological role, f(1)F(0) ATP synthase produces ATP from ADP in the presence of a proton or sodium gradient. F-type ATPases consist of two structural domains, F(1) containing the extramembraneous catalytic core and F(0) containing the membrane proton channel, linked together by a central stalk and a peripheral stalk. During catalysis, ATP synthesis in the catalytic domain of F(1) is coupled via a rotary mechanism of the central stalk subunits to proton translocation. Its function is as follows. Component of the F(0) channel, it forms part of the peripheral stalk, linking F(1) to F(0). This is ATP synthase subunit b from Prochlorococcus marinus subsp. pastoris (strain CCMP1986 / NIES-2087 / MED4).